The primary structure comprises 122 residues: Large ribosomal subunit protein uL14 (122 aa).

This sequence belongs to the universal ribosomal protein uL14 family. Part of the 50S ribosomal subunit. Forms a cluster with proteins L3 and L19. In the 70S ribosome, L14 and L19 interact and together make contacts with the 16S rRNA in bridges B5 and B8.

In terms of biological role, binds to 23S rRNA. Forms part of two intersubunit bridges in the 70S ribosome. The sequence is that of Large ribosomal subunit protein uL14 from Borreliella burgdorferi (strain ZS7) (Borrelia burgdorferi).